The following is a 1517-amino-acid chain: DNA-directed RNA polymerase subunit beta' (1517 aa).

Zn(2+) contacts are provided by cysteine 71, cysteine 73, cysteine 86, and cysteine 89. Residues aspartate 482, aspartate 484, and aspartate 486 each contribute to the Mg(2+) site. Positions 812, 886, 893, and 896 each coordinate Zn(2+).

Belongs to the RNA polymerase beta' chain family. In terms of assembly, the RNAP catalytic core consists of 2 alpha, 1 beta, 1 beta' and 1 omega subunit. When a sigma factor is associated with the core the holoenzyme is formed, which can initiate transcription. The cofactor is Mg(2+). Zn(2+) serves as cofactor.

It catalyses the reaction RNA(n) + a ribonucleoside 5'-triphosphate = RNA(n+1) + diphosphate. DNA-dependent RNA polymerase catalyzes the transcription of DNA into RNA using the four ribonucleoside triphosphates as substrates. The polypeptide is DNA-directed RNA polymerase subunit beta' (Campylobacter jejuni (strain RM1221)).